The sequence spans 163 residues: MALTLRVCSTFLRSCSSNSKSVLSGLSSVRFRSSCPVLISHLDHLVLTVRDLNKTTKFYSEVLGMEVVTFKGDRKALSFGEQKINLHQVGKEFEPKAQTPTPGSADLCLITKTPLKAVADHLKACGVTIEEGPVDRTGAVGPISSLYFRDPDDNLIEVSNYQQ.

Residues 41-161 (HLDHLVLTVR…DDNLIEVSNY (121 aa)) form the VOC domain.

It belongs to the glyoxalase I family.

This chain is Glyoxalase domain-containing protein 5 (glod5), found in Danio rerio (Zebrafish).